Reading from the N-terminus, the 313-residue chain is Aspartate carbamoyltransferase catalytic subunit (313 aa).

The carbamoyl phosphate site is built by Arg59 and Thr60. Lys87 is an L-aspartate binding site. 3 residues coordinate carbamoyl phosphate: Arg109, His137, and Gln140. L-aspartate contacts are provided by Arg170 and Arg224. Carbamoyl phosphate-binding residues include Gly265 and Pro266.

Belongs to the aspartate/ornithine carbamoyltransferase superfamily. ATCase family. Heterododecamer (2C3:3R2) of six catalytic PyrB chains organized as two trimers (C3), and six regulatory PyrI chains organized as three dimers (R2).

It catalyses the reaction carbamoyl phosphate + L-aspartate = N-carbamoyl-L-aspartate + phosphate + H(+). It participates in pyrimidine metabolism; UMP biosynthesis via de novo pathway; (S)-dihydroorotate from bicarbonate: step 2/3. In terms of biological role, catalyzes the condensation of carbamoyl phosphate and aspartate to form carbamoyl aspartate and inorganic phosphate, the committed step in the de novo pyrimidine nucleotide biosynthesis pathway. In Rhizobium meliloti (strain 1021) (Ensifer meliloti), this protein is Aspartate carbamoyltransferase catalytic subunit.